The following is a 122-amino-acid chain: Large ribosomal subunit protein uL14c (122 aa).

Belongs to the universal ribosomal protein uL14 family. As to quaternary structure, part of the 50S ribosomal subunit.

Its subcellular location is the plastid. It localises to the chloroplast. In terms of biological role, binds to 23S rRNA. In Physcomitrium patens (Spreading-leaved earth moss), this protein is Large ribosomal subunit protein uL14c.